The chain runs to 371 residues: Cuticle collagen 71 (371 aa).

A helical transmembrane segment spans residues 38–60; it reads GYAAVTFSTVSVICFCVTMPVVF. 2 disordered regions span residues 108-127 and 153-371; these read AGYD…GGDA and EGPH…GTRR. Residues 174–186 are compositionally biased toward pro residues; it reads PGPPGPPGPPGRP. The segment covering 188 to 201 has biased composition (low complexity); the sequence is PNGKAGANGLNGNP. Pro residues predominate over residues 202–222; that stretch reads GRPPEAPCEPVTPPPCPPCPA. The segment covering 223 to 240 has biased composition (low complexity); it reads GPKGAPGQAGYPGADGQP. Residues 223–280 form the Collagen-like domain; sequence GPKGAPGQAGYPGADGQPGSQGDNGEKGSDGAAGEKGRPGPLGKIGEPGATGETGENA. Basic and acidic residues predominate over residues 246–260; it reads NGEKGSDGAAGEKGR. Over residues 314-323 the composition is skewed to low complexity; the sequence is AGAPGAPGEN. Over residues 340 to 349 the composition is skewed to basic and acidic residues; sequence HDGKAGRAGE.

It belongs to the cuticular collagen family. As to quaternary structure, collagen polypeptide chains are complexed within the cuticle by disulfide bonds and other types of covalent cross-links.

The protein resides in the membrane. It localises to the nucleus. Probable cuticular collagen-like protein. Nematode cuticles are composed largely of collagen-like proteins. The cuticle functions both as an exoskeleton and as a barrier to protect the worm from its environment. Acts downstream of the Wnt signaling pathway, perhaps in the formation of the adult cuticle. The chain is Cuticle collagen 71 from Caenorhabditis elegans.